Reading from the N-terminus, the 362-residue chain is Probable endopolygalacturonase B (362 aa).

Residues 1–20 form the signal peptide; that stretch reads MHFLQNAFVAATMGAAPAAA. Residues 21–25 constitute a propeptide that is removed on maturation; that stretch reads TPLEK. An intrachain disulfide couples cysteine 28 to cysteine 43. 6 PbH1 repeats span residues 155–184, 185–206, 207–227, 236–257, 265–287, and 299–344; these read ADHL…DIGQ, STYI…AINS, GEHI…SIGS, VNDV…RIKT, VENV…VVEQ, and TNGV…DVTG. Aspartate 199 (proton donor) is an active-site residue. An intrachain disulfide couples cysteine 201 to cysteine 217. The active site involves histidine 221. Cysteine 327 and cysteine 332 form a disulfide bridge. N-linked (GlcNAc...) asparagine glycosylation occurs at asparagine 334. Cysteine 351 and cysteine 360 are disulfide-bonded.

This sequence belongs to the glycosyl hydrolase 28 family.

It is found in the secreted. The enzyme catalyses (1,4-alpha-D-galacturonosyl)n+m + H2O = (1,4-alpha-D-galacturonosyl)n + (1,4-alpha-D-galacturonosyl)m.. In terms of biological role, involved in maceration and soft-rotting of plant tissue. Hydrolyzes the 1,4-alpha glycosidic bonds of de-esterified pectate in the smooth region of the plant cell wall. The sequence is that of Probable endopolygalacturonase B (pgaB) from Aspergillus kawachii (White koji mold).